The following is a 1420-amino-acid chain: DNA-directed RNA polymerase subunit beta' (1420 aa).

4 residues coordinate Zn(2+): Cys71, Cys73, Cys86, and Cys89. Asp461, Asp463, and Asp465 together coordinate Mg(2+). Zn(2+) contacts are provided by Cys815, Cys889, Cys896, and Cys899.

The protein belongs to the RNA polymerase beta' chain family. As to quaternary structure, the RNAP catalytic core consists of 2 alpha, 1 beta, 1 beta' and 1 omega subunit. When a sigma factor is associated with the core the holoenzyme is formed, which can initiate transcription. The cofactor is Mg(2+). Zn(2+) is required as a cofactor.

It carries out the reaction RNA(n) + a ribonucleoside 5'-triphosphate = RNA(n+1) + diphosphate. In terms of biological role, DNA-dependent RNA polymerase catalyzes the transcription of DNA into RNA using the four ribonucleoside triphosphates as substrates. In Histophilus somni (strain 2336) (Haemophilus somnus), this protein is DNA-directed RNA polymerase subunit beta'.